Consider the following 44-residue polypeptide: uncharacterized protein (44 aa).

Residues 19–39 (AVGFVVSFGFFAFLFVMATVI) traverse the membrane as a helical segment.

It is found in the cell membrane. This is an uncharacterized protein from Bacillus subtilis (strain 168).